The following is a 177-amino-acid chain: Large ribosomal subunit protein uL6 (177 aa).

This sequence belongs to the universal ribosomal protein uL6 family. Part of the 50S ribosomal subunit.

This protein binds to the 23S rRNA, and is important in its secondary structure. It is located near the subunit interface in the base of the L7/L12 stalk, and near the tRNA binding site of the peptidyltransferase center. The chain is Large ribosomal subunit protein uL6 from Methanococcoides burtonii (strain DSM 6242 / NBRC 107633 / OCM 468 / ACE-M).